The following is a 358-amino-acid chain: 4-hydroxy-3-methylbut-2-en-1-yl diphosphate synthase (flavodoxin) (358 aa).

[4Fe-4S] cluster is bound by residues Cys270, Cys273, Cys305, and Glu312.

This sequence belongs to the IspG family. Requires [4Fe-4S] cluster as cofactor.

The catalysed reaction is (2E)-4-hydroxy-3-methylbut-2-enyl diphosphate + oxidized [flavodoxin] + H2O + 2 H(+) = 2-C-methyl-D-erythritol 2,4-cyclic diphosphate + reduced [flavodoxin]. The protein operates within isoprenoid biosynthesis; isopentenyl diphosphate biosynthesis via DXP pathway; isopentenyl diphosphate from 1-deoxy-D-xylulose 5-phosphate: step 5/6. Converts 2C-methyl-D-erythritol 2,4-cyclodiphosphate (ME-2,4cPP) into 1-hydroxy-2-methyl-2-(E)-butenyl 4-diphosphate. In Ruthia magnifica subsp. Calyptogena magnifica, this protein is 4-hydroxy-3-methylbut-2-en-1-yl diphosphate synthase (flavodoxin).